Here is a 243-residue protein sequence, read N- to C-terminus: Peptidase E (243 aa).

Residues Ser-118, Asp-133, and His-155 each act as charge relay system in the active site.

The protein belongs to the peptidase S51 family.

The protein localises to the cytoplasm. The enzyme catalyses Dipeptidase E catalyzes the hydrolysis of dipeptides Asp-|-Xaa. It does not act on peptides with N-terminal Glu, Asn or Gln, nor does it cleave isoaspartyl peptides.. In terms of biological role, hydrolyzes dipeptides containing N-terminal aspartate residues. May play a role in allowing the cell to use peptide aspartate to spare carbon otherwise required for the synthesis of the aspartate family of amino acids. The polypeptide is Peptidase E (Streptomyces coelicolor (strain ATCC BAA-471 / A3(2) / M145)).